The following is a 169-amino-acid chain: Ribosome maturation factor RimM (169 aa).

The PRC barrel domain occupies 97 to 169; the sequence is EDEYYWADLV…TITADWGLDY (73 aa).

This sequence belongs to the RimM family. In terms of assembly, binds ribosomal protein uS19.

The protein resides in the cytoplasm. Its function is as follows. An accessory protein needed during the final step in the assembly of 30S ribosomal subunit, possibly for assembly of the head region. Essential for efficient processing of 16S rRNA. May be needed both before and after RbfA during the maturation of 16S rRNA. It has affinity for free ribosomal 30S subunits but not for 70S ribosomes. This Neisseria gonorrhoeae (strain ATCC 700825 / FA 1090) protein is Ribosome maturation factor RimM.